The following is a 501-amino-acid chain: Protein MGF 505-4R (501 aa).

This sequence belongs to the asfivirus MGF 505 family.

Plays a role in virus cell tropism, and may be required for efficient virus replication in macrophages. The protein is Protein MGF 505-4R of African swine fever virus (isolate Tick/South Africa/Pretoriuskop Pr4/1996) (ASFV).